The chain runs to 263 residues: uncharacterized protein (263 aa).

ATP is bound at residue lysine 12–threonine 19.

Belongs to the ParA family. MinD subfamily.

This is an uncharacterized protein from Methanocaldococcus jannaschii (strain ATCC 43067 / DSM 2661 / JAL-1 / JCM 10045 / NBRC 100440) (Methanococcus jannaschii).